The following is a 167-amino-acid chain: SsrA-binding protein (167 aa).

Residues 139–158 (QNHDKRDAAKDRDWQRDKQR) are compositionally biased toward basic and acidic residues. Positions 139 to 167 (QNHDKRDAAKDRDWQRDKQRVMRRHNRDA) are disordered.

It belongs to the SmpB family.

The protein resides in the cytoplasm. Required for rescue of stalled ribosomes mediated by trans-translation. Binds to transfer-messenger RNA (tmRNA), required for stable association of tmRNA with ribosomes. tmRNA and SmpB together mimic tRNA shape, replacing the anticodon stem-loop with SmpB. tmRNA is encoded by the ssrA gene; the 2 termini fold to resemble tRNA(Ala) and it encodes a 'tag peptide', a short internal open reading frame. During trans-translation Ala-aminoacylated tmRNA acts like a tRNA, entering the A-site of stalled ribosomes, displacing the stalled mRNA. The ribosome then switches to translate the ORF on the tmRNA; the nascent peptide is terminated with the 'tag peptide' encoded by the tmRNA and targeted for degradation. The ribosome is freed to recommence translation, which seems to be the essential function of trans-translation. The protein is SsrA-binding protein of Xanthomonas axonopodis pv. citri (strain 306).